Consider the following 150-residue polypeptide: Putative solute carrier family 19 member 4 (150 aa).

Positions 118–137 are disordered; that stretch reads PSVREGACNEKSTENKKPQD. The span at 124-136 shows a compositional bias: basic and acidic residues; it reads ACNEKSTENKKPQ.

Belongs to the reduced folate carrier (RFC) transporter (TC 2.A.48) family.

In Homo sapiens (Human), this protein is Putative solute carrier family 19 member 4.